A 95-amino-acid polypeptide reads, in one-letter code: Protein TusB (95 aa).

Belongs to the DsrH/TusB family. In terms of assembly, heterohexamer, formed by a dimer of trimers. The hexameric TusBCD complex contains 2 copies each of TusB, TusC and TusD. The TusBCD complex interacts with TusE.

It localises to the cytoplasm. In terms of biological role, part of a sulfur-relay system required for 2-thiolation of 5-methylaminomethyl-2-thiouridine (mnm(5)s(2)U) at tRNA wobble positions. This chain is Protein TusB, found in Salmonella arizonae (strain ATCC BAA-731 / CDC346-86 / RSK2980).